The primary structure comprises 211 residues: MISYYFQGVALGAAMILPLGPQNAFVMNQGIRRQYHLMIALLCALSDLVLISAGIFGGSALLMQSPWLLALVTWGGVAFLLWYGFGALKTAMSSNLELASAEVMKQGRWKIIATMLAVTWLNPHVYLDTFVVLGSLGGQLAMEPKRWFALGTISASFLWFFGLALLAAWLAPRLRTAKAQRIINILVGVVMWLIAFQLAREGVAHMHALFN.

The next 6 helical transmembrane spans lie at 1–21 (MISY…PLGP), 37–57 (LMIA…GIFG), 68–88 (LLAL…FGAL), 111–131 (IIAT…DTFV), 147–167 (WFAL…ALLA), and 179–199 (AQRI…FQLA).

This sequence belongs to the LysE/ArgO transporter (TC 2.A.75) family.

Its subcellular location is the cell inner membrane. It carries out the reaction L-arginine(in) = L-arginine(out). In terms of biological role, involved in the export of arginine. Important to control the intracellular level of arginine and the correct balance between arginine and lysine. This Salmonella paratyphi B (strain ATCC BAA-1250 / SPB7) protein is Arginine exporter protein ArgO.